Consider the following 604-residue polypeptide: Inactive all-trans-retinol 13,14-reductase (604 aa).

A signal peptide spans 1–17 (MWWILLFLEWFVDWARG).

It belongs to the carotenoid/retinoid oxidoreductase family. CrtISO subfamily.

The protein is Inactive all-trans-retinol 13,14-reductase (retsatl) of Danio rerio (Zebrafish).